The primary structure comprises 609 residues: Actin-interacting protein 1-2 (609 aa).

12 WD repeats span residues 2 to 42 (ELSE…VTLD), 54 to 93 (EHAY…VLKN), 97 to 141 (VLAG…GEFD), 142 to 182 (GHSR…FKLS), 185 to 224 (EHSN…ILGE), 230 to 269 (GHKG…SGSL), 277 to 318 (GSSG…KSPF), 322 to 362 (GHMK…CGKL), 445 to 484 (NLGF…LTEE), 489 to 528 (RHRG…MKLK), 532 to 571 (YHSA…SSRM), and 576 to 609 (AHLG…FTPQ).

In terms of tissue distribution, expressed in leaves, stems, flower buds and flowers.

Functionally, binds actin. Enhances the F-actin depolymerization activity of actin-depolymerizing factor (ADF) proteins. This is Actin-interacting protein 1-2 from Arabidopsis thaliana (Mouse-ear cress).